Consider the following 321-residue polypeptide: N-acetyllactosaminide alpha-1,3-galactosyltransferase-like 1 (321 aa).

Residues Met1–Glu6 are Cytoplasmic-facing. The chain crosses the membrane as a helical; Signal-anchor for type II membrane protein span at residues Thr7–Ser24. At Arg25–Thr321 the chain is on the lumenal side. Residues Asn87 and Asn99 are each glycosylated (N-linked (GlcNAc...) asparagine). Residues Phe95–Phe100, Thr187–Asn189, and His209–Trp212 contribute to the substrate site. Glu277 acts as the Nucleophile in catalysis.

The protein belongs to the glycosyltransferase 6 family. Mn(2+) serves as cofactor.

Its subcellular location is the golgi apparatus. The protein localises to the golgi stack membrane. It carries out the reaction a beta-D-galactosyl-(1-&gt;4)-N-acetyl-beta-D-glucosaminyl derivative + UDP-alpha-D-galactose = an alpha-D-galactosyl-(1-&gt;3)-beta-D-galactosyl-(1-&gt;4)-N-acetyl-beta-D-glucosaminyl derivative + UDP + H(+). The protein operates within protein modification; protein glycosylation. Functionally, synthesizes the galactose-alpha(1,3)-galactose group by catalyzing the transfer of a galactose residue, with an alpha-1,3 linkage, on terminal lactosaminide (Gal-beta-1,4-GlcNAc-R) disaccharide borne by a glycoprotein or a glycolipid. This Rattus norvegicus (Rat) protein is N-acetyllactosaminide alpha-1,3-galactosyltransferase-like 1 (Ggta1l1).